The following is a 369-amino-acid chain: Peptide chain release factor 2 (369 aa).

An N5-methylglutamine modification is found at Q249.

This sequence belongs to the prokaryotic/mitochondrial release factor family. Methylated by PrmC. Methylation increases the termination efficiency of RF2.

It is found in the cytoplasm. Its function is as follows. Peptide chain release factor 2 directs the termination of translation in response to the peptide chain termination codons UGA and UAA. The polypeptide is Peptide chain release factor 2 (Corynebacterium diphtheriae (strain ATCC 700971 / NCTC 13129 / Biotype gravis)).